We begin with the raw amino-acid sequence, 116 residues long: Protein Rev (116 aa).

Residues S5 and S8 each carry the phosphoserine; by host CK2 modification. Residues 18–26 (LIKFLYQSN) are homomultimerization. Positions 25-49 (SNPPPSLEGTRQARRNRRRRWRERQ) are disordered. The Nuclear localization signal and RNA-binding (RRE) signature appears at 34 to 50 (TRQARRNRRRRWRERQR). Residues 36–47 (QARRNRRRRWRE) are compositionally biased toward basic residues. The Nuclear export signal and binding to XPO1 motif lies at 73–84 (LPLPPLEKLTLD). Residues S92 and S99 each carry the phosphoserine; by host modification. Residues 92–116 (SGTQGVGSPQILVESPAILEPGTKE) form a disordered region.

The protein belongs to the HIV-1 REV protein family. As to quaternary structure, homomultimer; when bound to the RRE. Multimeric assembly is essential for activity and may involve XPO1. Binds to human KPNB1, XPO1, TNPO1, RANBP5 and IPO7. Interacts with the viral Integrase. Interacts with human KHDRBS1. Interacts with human NAP1; this interaction decreases Rev multimerization and stimulates its activity. Interacts with human DEAD-box helicases DDX3 and DDX24; these interactions may serve for viral RNA export to the cytoplasm and packaging, respectively. Interacts with human PSIP1; this interaction may inhibit HIV-1 DNA integration by promoting dissociation of the Integrase-LEDGF/p75 complex. Post-translationally, asymmetrically arginine dimethylated at one site by host PRMT6. Methylation impairs the RNA-binding activity and export of viral RNA from the nucleus to the cytoplasm. In terms of processing, phosphorylated by protein kinase CK2. Presence of, and maybe binding to the N-terminus of the regulatory beta subunit of CK2 is necessary for CK2-mediated Rev's phosphorylation.

The protein localises to the host nucleus. It is found in the host nucleolus. The protein resides in the host cytoplasm. Escorts unspliced or incompletely spliced viral pre-mRNAs (late transcripts) out of the nucleus of infected cells. These pre-mRNAs carry a recognition sequence called Rev responsive element (RRE) located in the env gene, that is not present in fully spliced viral mRNAs (early transcripts). This function is essential since most viral proteins are translated from unspliced or partially spliced pre-mRNAs which cannot exit the nucleus by the pathway used by fully processed cellular mRNAs. Rev itself is translated from a fully spliced mRNA that readily exits the nucleus. Rev's nuclear localization signal (NLS) binds directly to KPNB1/Importin beta-1 without previous binding to KPNA1/Importin alpha-1. KPNB1 binds to the GDP bound form of RAN (Ran-GDP) and targets Rev to the nucleus. In the nucleus, the conversion from Ran-GDP to Ran-GTP dissociates Rev from KPNB1 and allows Rev's binding to the RRE in viral pre-mRNAs. Rev multimerization on the RRE via cooperative assembly exposes its nuclear export signal (NES) to the surface. Rev can then form a complex with XPO1/CRM1 and Ran-GTP, leading to nuclear export of the complex. Conversion from Ran-GTP to Ran-GDP mediates dissociation of the Rev/RRE/XPO1/RAN complex, so that Rev can return to the nucleus for a subsequent round of export. Beside KPNB1, also seems to interact with TNPO1/Transportin-1, RANBP5/IPO5 and IPO7/RANBP7 for nuclear import. The nucleoporin-like HRB/RIP is an essential cofactor that probably indirectly interacts with Rev to release HIV RNAs from the perinuclear region to the cytoplasm. This is Protein Rev from Human immunodeficiency virus type 1 group M subtype B (strain 89.6) (HIV-1).